A 534-amino-acid polypeptide reads, in one-letter code: Major facilitator-type transporter sor6 (534 aa).

N-linked (GlcNAc...) asparagine glycosylation is found at Asn-29 and Asn-36. Transmembrane regions (helical) follow at residues Trp-66–Tyr-86, Leu-103–Gly-123, Ala-160–Leu-180, Phe-182–Leu-202, Gly-209–Val-229, Trp-241–Val-261, Ile-318–Gly-338, Phe-354–Ile-374, Leu-395–Thr-415, Val-424–Val-444, Ala-456–Phe-476, and Ile-486–Phe-506.

Belongs to the major facilitator superfamily. Sugar transporter (TC 2.A.1.1) family.

It is found in the membrane. Major facilitator-type transporter; part of the gene cluster that mediates the biosynthesis of sorbicillinoids, a diverse group of yellow secondary metabolites that restrict growth of competing pathogenic fungi but not of bacteria. This Hypocrea jecorina (strain QM6a) (Trichoderma reesei) protein is Major facilitator-type transporter sor6.